Here is a 393-residue protein sequence, read N- to C-terminus: Nuclear hormone receptor family member nhr-90 (393 aa).

The nuclear receptor DNA-binding region spans 6-79 (LQTCKICGAE…AGMKIEYFQH (74 aa)). Residues 9 to 30 (CKICGAENTRGNHFGVQCCRAC) form an NR C4-type zinc finger. An NR C4-type; degenerate zinc finger spans residues 47-62 (CLSVHCGEAARFCKPC). Residues 121-388 (DLNSLVGKAS…FSHPEMFIDT (268 aa)) form the NR LBD domain.

This sequence belongs to the nuclear hormone receptor family.

The protein resides in the nucleus. Orphan nuclear receptor. This is Nuclear hormone receptor family member nhr-90 (nhr-90) from Caenorhabditis elegans.